Here is a 102-residue protein sequence, read N- to C-terminus: MEIGLTHYLTVGAILFGLGAFGILMNRRNVIVLLMAIELMLLAVNINLVAFSVFLNDLTGQVFTLFILTVAAAEAAIGLAILVVYFRNRGTIAVEDINMMKG.

A run of 3 helical transmembrane segments spans residues 3-23, 31-51, and 66-86; these read IGLT…AFGI, IVLL…LVAF, and FILT…VVYF.

Belongs to the complex I subunit 4L family. In terms of assembly, NDH-1 is composed of 14 different subunits. Subunits NuoA, H, J, K, L, M, N constitute the membrane sector of the complex.

The protein resides in the cell inner membrane. It carries out the reaction a quinone + NADH + 5 H(+)(in) = a quinol + NAD(+) + 4 H(+)(out). Its function is as follows. NDH-1 shuttles electrons from NADH, via FMN and iron-sulfur (Fe-S) centers, to quinones in the respiratory chain. The immediate electron acceptor for the enzyme in this species is believed to be ubiquinone. Couples the redox reaction to proton translocation (for every two electrons transferred, four hydrogen ions are translocated across the cytoplasmic membrane), and thus conserves the redox energy in a proton gradient. The polypeptide is NADH-quinone oxidoreductase subunit K (Rhodospirillum centenum (strain ATCC 51521 / SW)).